Here is a 72-residue protein sequence, read N- to C-terminus: Translation initiation factor IF-1 (72 aa).

Positions 1–72 constitute an S1-like domain; the sequence is MSKEDMIEFS…TKGRITFRFK (72 aa).

The protein belongs to the IF-1 family. In terms of assembly, component of the 30S ribosomal translation pre-initiation complex which assembles on the 30S ribosome in the order IF-2 and IF-3, IF-1 and N-formylmethionyl-tRNA(fMet); mRNA recruitment can occur at any time during PIC assembly.

The protein resides in the cytoplasm. Its function is as follows. One of the essential components for the initiation of protein synthesis. Stabilizes the binding of IF-2 and IF-3 on the 30S subunit to which N-formylmethionyl-tRNA(fMet) subsequently binds. Helps modulate mRNA selection, yielding the 30S pre-initiation complex (PIC). Upon addition of the 50S ribosomal subunit IF-1, IF-2 and IF-3 are released leaving the mature 70S translation initiation complex. This Granulibacter bethesdensis (strain ATCC BAA-1260 / CGDNIH1) protein is Translation initiation factor IF-1.